A 523-amino-acid chain; its full sequence is Probable E3 ubiquitin-protein ligase ZFP1 (523 aa).

Basic and acidic residues predominate over residues 18-28 (EQGHSHIHSES). Positions 18–43 (EQGHSHIHSESFNRTGNDSSDQGAQH) are disordered. The segment covering 29-40 (FNRTGNDSSDQG) has biased composition (polar residues). The RING-type; atypical zinc-finger motif lies at 471-512 (CIICQEEYQVKECIGTLDCGHRYHEDCIKQWLMVKNLCPICK).

Belongs to the RING-type zinc finger family. As to quaternary structure, interacts with DJA6.

It catalyses the reaction S-ubiquitinyl-[E2 ubiquitin-conjugating enzyme]-L-cysteine + [acceptor protein]-L-lysine = [E2 ubiquitin-conjugating enzyme]-L-cysteine + N(6)-ubiquitinyl-[acceptor protein]-L-lysine.. It participates in protein modification; protein ubiquitination. Functionally, probable E3 ubiquitin-protein ligase. The polypeptide is Probable E3 ubiquitin-protein ligase ZFP1 (Oryza sativa subsp. japonica (Rice)).